We begin with the raw amino-acid sequence, 459 residues long: Biphenyl dioxygenase subunit alpha (459 aa).

One can recognise a Rieske domain in the interval 58–156 (WLLLGHESHV…KEGDCGFDKA (99 aa)). The [2Fe-2S] cluster site is built by cysteine 100, histidine 102, cysteine 120, and histidine 123. Fe cation-binding residues include histidine 233 and histidine 239.

This sequence belongs to the bacterial ring-hydroxylating dioxygenase alpha subunit family. Heterohexamer consisting of three BphA subunits and three BphE subunits. A ferredoxin (BphF) and a ferredoxin reductase (BphG) must be present to obtain activity. The cofactor is [2Fe-2S] cluster. Fe cation is required as a cofactor.

The catalysed reaction is biphenyl + NADH + O2 + H(+) = (2R,3S)-3-phenylcyclohexa-3,5-diene-1,2-diol + NAD(+). It participates in xenobiotic degradation; biphenyl degradation; 2-hydroxy-2,4-pentadienoate and benzoate from biphenyl: step 1/4. This Paraburkholderia xenovorans (strain LB400) protein is Biphenyl dioxygenase subunit alpha (bphA).